The following is a 166-amino-acid chain: Peptidyl-prolyl cis-trans isomerase cyp18 (166 aa).

The PPIase cyclophilin-type domain occupies 2–164 (STVELNTSAG…QPVVIESAKI (163 aa)).

It belongs to the cyclophilin-type PPIase family. As to quaternary structure, monomer.

Its subcellular location is the cytoplasm. The enzyme catalyses [protein]-peptidylproline (omega=180) = [protein]-peptidylproline (omega=0). With respect to regulation, inhibition by cyclosporin A with a Ki of 21 mu-mol. Functionally, PPIases accelerate the folding of proteins. It catalyzes the cis-trans isomerization of proline imidic peptide bonds in oligopeptides. The chain is Peptidyl-prolyl cis-trans isomerase cyp18 from Streptomyces antibioticus.